Here is an 85-residue protein sequence, read N- to C-terminus: RNA-binding protein Hfq (85 aa).

Residues 9–68 (DPFLNELRKEKVPVSVFLVNGIKLHGIIDSFDQYVVMLKNSITQMVYKHAISTVVPSRMV) form the Sm domain.

It belongs to the Hfq family. Homohexamer.

RNA chaperone that binds small regulatory RNA (sRNAs) and mRNAs to facilitate mRNA translational regulation in response to envelope stress, environmental stress and changes in metabolite concentrations. Also binds with high specificity to tRNAs. This is RNA-binding protein Hfq from Legionella pneumophila (strain Paris).